Reading from the N-terminus, the 170-residue chain is Class I hydrophobin E (170 aa).

The first 19 residues, 1 to 19, serve as a signal peptide directing secretion; the sequence is MQLTTLLTGLISVLSVTTA. 4 cysteine pairs are disulfide-bonded: C62/C126, C70/C117, C71/C105, and C127/C139.

It belongs to the fungal hydrophobin family.

It localises to the secreted. The protein localises to the cell wall. Aerial growth, conidiation, and dispersal of filamentous fungi in the environment rely upon a capability of their secreting small amphipathic proteins called hydrophobins (HPBs) with low sequence identity. Class I can self-assemble into an outermost layer of rodlet bundles on aerial cell surfaces, conferring cellular hydrophobicity that supports fungal growth, development and dispersal; whereas Class II form highly ordered films at water-air interfaces through intermolecular interactions but contribute nothing to the rodlet structure. In P.expansum, hydrophobins contribute to germination, tolerance to cold stress and mycotoxins patulin and citrinin production. The sequence is that of Class I hydrophobin E from Penicillium expansum (Blue mold rot fungus).